We begin with the raw amino-acid sequence, 336 residues long: Ketol-acid reductoisomerase (NADP(+)) (336 aa).

A KARI N-terminal Rossmann domain is found at 3 to 183; it reads ATMYYDRDVS…GGTRAGVLET (181 aa). NADP(+) contacts are provided by residues 26–29, arginine 49, serine 52, serine 54, and 84–87; these read YGSQ and DETQ. Residue histidine 109 is part of the active site. Glycine 135 contributes to the NADP(+) binding site. In terms of domain architecture, KARI C-terminal knotted spans 184 to 329; sequence TFKEETETDL…RELRSKMPFI (146 aa). Mg(2+) is bound by residues aspartate 192, glutamate 196, glutamate 228, and glutamate 232. Serine 253 contacts substrate.

This sequence belongs to the ketol-acid reductoisomerase family. Mg(2+) serves as cofactor.

It carries out the reaction (2R)-2,3-dihydroxy-3-methylbutanoate + NADP(+) = (2S)-2-acetolactate + NADPH + H(+). The catalysed reaction is (2R,3R)-2,3-dihydroxy-3-methylpentanoate + NADP(+) = (S)-2-ethyl-2-hydroxy-3-oxobutanoate + NADPH + H(+). It functions in the pathway amino-acid biosynthesis; L-isoleucine biosynthesis; L-isoleucine from 2-oxobutanoate: step 2/4. The protein operates within amino-acid biosynthesis; L-valine biosynthesis; L-valine from pyruvate: step 2/4. Involved in the biosynthesis of branched-chain amino acids (BCAA). Catalyzes an alkyl-migration followed by a ketol-acid reduction of (S)-2-acetolactate (S2AL) to yield (R)-2,3-dihydroxy-isovalerate. In the isomerase reaction, S2AL is rearranged via a Mg-dependent methyl migration to produce 3-hydroxy-3-methyl-2-ketobutyrate (HMKB). In the reductase reaction, this 2-ketoacid undergoes a metal-dependent reduction by NADPH to yield (R)-2,3-dihydroxy-isovalerate. The chain is Ketol-acid reductoisomerase (NADP(+)) from Deinococcus geothermalis (strain DSM 11300 / CIP 105573 / AG-3a).